The following is a 267-amino-acid chain: Putative B3 domain-containing protein LOC_Os07g12820 (267 aa).

Positions 4 to 99 form a DNA-binding region, TF-B3; it reads PTFSMVKIKT…RLNVIIFNKE (96 aa).

The protein resides in the nucleus. The sequence is that of Putative B3 domain-containing protein LOC_Os07g12820 from Oryza sativa subsp. japonica (Rice).